An 87-amino-acid chain; its full sequence is UPF0250 protein BUsg_472 (87 aa).

The protein belongs to the UPF0250 family.

This Buchnera aphidicola subsp. Schizaphis graminum (strain Sg) protein is UPF0250 protein BUsg_472.